Reading from the N-terminus, the 95-residue chain is Aspartyl/glutamyl-tRNA(Asn/Gln) amidotransferase subunit C (95 aa).

The protein belongs to the GatC family. As to quaternary structure, heterotrimer of A, B and C subunits.

The catalysed reaction is L-glutamyl-tRNA(Gln) + L-glutamine + ATP + H2O = L-glutaminyl-tRNA(Gln) + L-glutamate + ADP + phosphate + H(+). It carries out the reaction L-aspartyl-tRNA(Asn) + L-glutamine + ATP + H2O = L-asparaginyl-tRNA(Asn) + L-glutamate + ADP + phosphate + 2 H(+). In terms of biological role, allows the formation of correctly charged Asn-tRNA(Asn) or Gln-tRNA(Gln) through the transamidation of misacylated Asp-tRNA(Asn) or Glu-tRNA(Gln) in organisms which lack either or both of asparaginyl-tRNA or glutaminyl-tRNA synthetases. The reaction takes place in the presence of glutamine and ATP through an activated phospho-Asp-tRNA(Asn) or phospho-Glu-tRNA(Gln). The sequence is that of Aspartyl/glutamyl-tRNA(Asn/Gln) amidotransferase subunit C from Prochlorococcus marinus (strain NATL2A).